The sequence spans 384 residues: G protein-coupled receptor 88 (384 aa).

The Extracellular segment spans residues 1 to 35; it reads MTNSSSTSTSTTTGGSLLLLCEEEESWAGRRIPVS. Residue N3 is glycosylated (N-linked (GlcNAc...) asparagine). A helical transmembrane segment spans residues 36–56; sequence LLYSGLAIGGTLANGMVIYLV. The Cytoplasmic segment spans residues 57 to 73; the sequence is SSFRKLQTTSNAFIVNG. A helical transmembrane segment spans residues 74–94; it reads CAADLSVCALWMPQEAVLGLL. The Extracellular portion of the chain corresponds to 95–116; sequence PSGSAEPPGDWDGGGGSYRLLR. Residues 117-136 form a helical membrane-spanning segment; the sequence is GGLLGLGLTVSLLSHCLVAL. At 137 to 158 the chain is on the cytoplasmic side; it reads NRYLLITRAPATYQVLYQRRHT. The helical transmembrane segment at 159 to 179 threads the bilayer; the sequence is VGMLALSWALALGLVLLLPPW. Residues 180–195 are Extracellular-facing; that stretch reads APKPGAEPPQVHYPAL. The chain crosses the membrane as a helical span at residues 196–216; it reads LAAGALLAQTALLLHCYLGIV. Residues 217–285 lie on the Cytoplasmic side of the membrane; the sequence is RRVRVSVKRV…RAQRRLSGLS (69 aa). A helical transmembrane segment spans residues 286-306; the sequence is VLLLCCVFLLATQPLVWVSLA. At 307 to 310 the chain is on the extracellular side; the sequence is SGFS. The helical transmembrane segment at 311–331 threads the bilayer; it reads LPVPWGVQAASWLLCCALSAL. Residues 332-384 are Cytoplasmic-facing; the sequence is NPLLYTWRNEEFRRSVRSVLPGVGDAAAAAAAATAVPAMSQAQLGTRAAGQHW.

The protein belongs to the G-protein coupled receptor 1 family. As to expression, expressed predominantly in the striatum.

The protein localises to the cell membrane. It localises to the cell projection. It is found in the cilium membrane. Its subcellular location is the cytoplasm. The protein resides in the nucleus. In terms of biological role, orphan G protein-coupled receptor implicated in a large repertoire of behavioral responses that engage motor activities, spatial learning, and emotional processing. May play a role in the regulation of cognitive and motor function. Couples with the heterotrimeric G protein complex of the G(i) subfamily, consisting of GNAI1, GNB1 and GNG2, thereby acting through a G(i)-mediated pathway. Plays a role in the attenuation of D1 dopamine receptor (D1R)-mediated cAMP response in ciliated cells. In on-ciliated cells, involved in the inhibition of the beta-2 adrenergic receptor (B2AR) response. The chain is G protein-coupled receptor 88 (Gpr88) from Mus musculus (Mouse).